The primary structure comprises 253 residues: 2-dehydro-3-deoxy-D-gluconate 5-dehydrogenase (253 aa).

Position 14-38 (14-38 (VVTGCDTGLGQGMALGLAQAGCDIV)) interacts with NAD(+). S145 contacts substrate. Y158 (proton acceptor) is an active-site residue.

This sequence belongs to the short-chain dehydrogenases/reductases (SDR) family. As to quaternary structure, homotetramer.

It catalyses the reaction 2-dehydro-3-deoxy-D-gluconate + NAD(+) = 3-deoxy-D-glycero-2,5-hexodiulosonate + NADH + H(+). The catalysed reaction is 4-pregnen-20,21-diol-3-one + NAD(+) = 21-hydroxyprogesterone + NADH + H(+). Catalyzes the reversible reduction of 2,5-diketo-3-deoxygluconate (DKII or 4,6-dihydroxy-2,5-dioxohexanoate) into 2-keto-3-deoxygluconate (KDG or 2-dehydro-3-deoxygluconate) with a concomitant oxidation of NADH. To a lesser extent, can also reduce 5-keto-D-gluconate and oxidize D-gluconate and 1,2-propanediol. Together with KduI, seems to play a role in the catabolism of hexuronates under osmotic stress conditions, substituting for the regular hexuronate degrading enzymes UxaABC and UxuAB whose expression is repressed in these conditions. In vitro, also exhibits NADH-dependent 20-ketosteroid reductase activity against eukaryotic steroid hormone 11-deoxycorticosterone (11-DOC), which is converted into the product 4-pregnen-20,21-diol-3-one. In addition to 11-DOC, five other C21 steroid compounds (11-deoxycortisol, cortisol, corticosterone, cortisone, and 21-hydroxypregnenolone) are reduced by KduD, but steroids lacking the hydroxyl group at C21 position, such as pregnenolone, testosterone propionate, cortisone acetate, or progesterone, cannot be used as substrate. The chain is 2-dehydro-3-deoxy-D-gluconate 5-dehydrogenase from Escherichia coli (strain K12).